A 104-amino-acid polypeptide reads, in one-letter code: MAAKIRKGDKVIVLTGRDKGRTGEVFAVRPSEGRALVRGVNMVKRHQKQTPQQEGGIISKESPIHLSNLALLDKDGKPTRVGFKIGKDGTKVRIAKSSGAEIDG.

Belongs to the universal ribosomal protein uL24 family. Part of the 50S ribosomal subunit.

Its function is as follows. One of two assembly initiator proteins, it binds directly to the 5'-end of the 23S rRNA, where it nucleates assembly of the 50S subunit. In terms of biological role, one of the proteins that surrounds the polypeptide exit tunnel on the outside of the subunit. The sequence is that of Large ribosomal subunit protein uL24 from Afipia carboxidovorans (strain ATCC 49405 / DSM 1227 / KCTC 32145 / OM5) (Oligotropha carboxidovorans).